The following is a 120-amino-acid chain: Large ribosomal subunit protein uL18 (120 aa).

Positions 1-29 (MITKPNKNAGRKKRHAHVRRTLSGTPQRP) are disordered. A compositionally biased stretch (basic residues) spans 9–20 (AGRKKRHAHVRR).

It belongs to the universal ribosomal protein uL18 family. Part of the 50S ribosomal subunit; part of the 5S rRNA/L5/L18/L25 subcomplex. Contacts the 5S and 23S rRNAs.

Its function is as follows. This is one of the proteins that bind and probably mediate the attachment of the 5S RNA into the large ribosomal subunit, where it forms part of the central protuberance. The chain is Large ribosomal subunit protein uL18 from Shouchella clausii (strain KSM-K16) (Alkalihalobacillus clausii).